Reading from the N-terminus, the 500-residue chain is Polyamine oxidase 1 (500 aa).

Positions 1–28 (MSSSPSFGLLAVAALLLALSLAQHGSLA) are cleaved as a signal peptide. FAD is bound by residues 42–43 (MS), glutamate 63, arginine 71, and 87–88 (NW). Glutamate 90 is a substrate binding site. N-linked (GlcNAc...) asparagine glycosylation occurs at asparagine 105. Glutamate 198 is a substrate binding site. 3 residues coordinate FAD: valine 265, tyrosine 427, and glutamate 458. Glycine 466 is a binding site for substrate. 467-468 (YV) contacts FAD. Cysteine 485 and cysteine 491 form a disulfide bridge.

The protein belongs to the flavin monoamine oxidase family. In terms of assembly, monomer. It depends on FAD as a cofactor.

It localises to the secreted. Its subcellular location is the extracellular space. It is found in the apoplast. The protein localises to the cell wall. It catalyses the reaction spermidine + O2 + H2O = 4-aminobutanal + propane-1,3-diamine + H2O2. It carries out the reaction N(8)-acetylspermidine + O2 + H2O = 4-acetamidobutanal + propane-1,3-diamine + H2O2. The enzyme catalyses spermine + O2 + H2O = N-(3-aminopropyl)-4-aminobutanal + propane-1,3-diamine + H2O2. The catalysed reaction is N(1)-acetylspermine + O2 + H2O = N-(3-acetamidopropyl)-4-aminobutanal + propane-1,3-diamine + H2O2. The protein operates within amine and polyamine degradation; spermine degradation. Its function is as follows. Flavoenzyme involved in polyamine back-conversion. Catalyzes the oxidation of the secondary amino group of polyamines, such as spermine, spermidine and their acetyl derivatives. Plays an important role in the regulation of polyamine intracellular concentration. The chain is Polyamine oxidase 1 from Zea mays (Maize).